Here is a 102-residue protein sequence, read N- to C-terminus: MAQEVRLRLSSTDHYKLEEVCERIKKVVEETGAQMSGPIPLPTKRLLVPTRKSPDGEGKATWDKWEMRIHKRLIDIKGDERTIRRLMRIHIPEEVHVEIIMK.

Positions 34–59 (QMSGPIPLPTKRLLVPTRKSPDGEGK) are disordered.

Belongs to the universal ribosomal protein uS10 family. Part of the 30S ribosomal subunit.

Its function is as follows. Involved in the binding of tRNA to the ribosomes. This is Small ribosomal subunit protein uS10 from Methanopyrus kandleri (strain AV19 / DSM 6324 / JCM 9639 / NBRC 100938).